A 204-amino-acid polypeptide reads, in one-letter code: Large ribosomal subunit protein uL4 (204 aa).

The interval V56 to S79 is disordered.

This sequence belongs to the universal ribosomal protein uL4 family. Part of the 50S ribosomal subunit.

Functionally, one of the primary rRNA binding proteins, this protein initially binds near the 5'-end of the 23S rRNA. It is important during the early stages of 50S assembly. It makes multiple contacts with different domains of the 23S rRNA in the assembled 50S subunit and ribosome. In terms of biological role, forms part of the polypeptide exit tunnel. This is Large ribosomal subunit protein uL4 from Wolbachia pipientis subsp. Culex pipiens (strain wPip).